The chain runs to 458 residues: tRNA-2-methylthio-N(6)-dimethylallyladenosine synthase (458 aa).

An MTTase N-terminal domain is found at 15–134 (KKVFIKTYGC…LPELLQQAQQ (120 aa)). Cys-24, Cys-60, Cys-97, Cys-175, Cys-179, and Cys-182 together coordinate [4Fe-4S] cluster. Positions 161-393 (QKRGVSAFLT…QALLLDQQHR (233 aa)) constitute a Radical SAM core domain. In terms of domain architecture, TRAM spans 396-457 (RSKIGQTTDV…SNSFVGEKAN (62 aa)).

This sequence belongs to the methylthiotransferase family. MiaB subfamily. Monomer. The cofactor is [4Fe-4S] cluster.

Its subcellular location is the cytoplasm. The catalysed reaction is N(6)-dimethylallyladenosine(37) in tRNA + (sulfur carrier)-SH + AH2 + 2 S-adenosyl-L-methionine = 2-methylsulfanyl-N(6)-dimethylallyladenosine(37) in tRNA + (sulfur carrier)-H + 5'-deoxyadenosine + L-methionine + A + S-adenosyl-L-homocysteine + 2 H(+). Its function is as follows. Catalyzes the methylthiolation of N6-(dimethylallyl)adenosine (i(6)A), leading to the formation of 2-methylthio-N6-(dimethylallyl)adenosine (ms(2)i(6)A) at position 37 in tRNAs that read codons beginning with uridine. The chain is tRNA-2-methylthio-N(6)-dimethylallyladenosine synthase from Bartonella bacilliformis (strain ATCC 35685 / KC583 / Herrer 020/F12,63).